The primary structure comprises 357 residues: MAEHWGDAIYAARRKGDETTREAMFTYTNSNNTKDPFEGPNYHIAPRWVYNVATVWMFFVVVASTFTNGLVLVATAKFKKLRHPLNWILVNLAIADLGETLFASTISVINQFFGYFILGHPMCIFEGYTVSVCGIAALWSLTVISWERWVVVCKPFGNVKFDAKWASAGIIFSWVWAAAWCAPPIFGWSRYWPHGLKTSCGPDVFSGSEDPGVQSYMVVLMITCCIIPLAIIILCYIAVYLAIHAVAQQQKDSESTQKAEKEVSRMVVVMIFAYCFCWGPYTFFACFAAANPGYAFHPLAAAMPAYFAKSATIYNPVIYVFMNRQFRVCIMQLFGKKVDDGSEVSTSKTEVSSVAPA.

Residues 1 to 49 (MAEHWGDAIYAARRKGDETTREAMFTYTNSNNTKDPFEGPNYHIAPRWV) lie on the Extracellular side of the membrane. N-linked (GlcNAc...) asparagine glycosylation is present at Asn-31. A helical membrane pass occupies residues 50 to 74 (YNVATVWMFFVVVASTFTNGLVLVA). Topologically, residues 75-86 (TAKFKKLRHPLN) are cytoplasmic. A helical membrane pass occupies residues 87-112 (WILVNLAIADLGETLFASTISVINQF). At 113–126 (FGYFILGHPMCIFE) the chain is on the extracellular side. Cys-123 and Cys-200 are disulfide-bonded. The chain crosses the membrane as a helical span at residues 127–146 (GYTVSVCGIAALWSLTVISW). Topologically, residues 147–165 (ERWVVVCKPFGNVKFDAKW) are cytoplasmic. Residues 166 to 189 (ASAGIIFSWVWAAAWCAPPIFGWS) traverse the membrane as a helical segment. Topologically, residues 190 to 215 (RYWPHGLKTSCGPDVFSGSEDPGVQS) are extracellular. The helical transmembrane segment at 216–243 (YMVVLMITCCIIPLAIIILCYIAVYLAI) threads the bilayer. Residues 244 to 265 (HAVAQQQKDSESTQKAEKEVSR) lie on the Cytoplasmic side of the membrane. Residues 266–289 (MVVVMIFAYCFCWGPYTFFACFAA) form a helical membrane-spanning segment. Topologically, residues 290 to 297 (ANPGYAFH) are extracellular. The helical transmembrane segment at 298 to 322 (PLAAAMPAYFAKSATIYNPVIYVFM) threads the bilayer. Lys-309 is subject to N6-(retinylidene)lysine. The Cytoplasmic segment spans residues 323–357 (NRQFRVCIMQLFGKKVDDGSEVSTSKTEVSSVAPA).

Belongs to the G-protein coupled receptor 1 family. Opsin subfamily. In terms of processing, phosphorylated on some or all of the serine and threonine residues present in the C-terminal region. Retinal double cone principal photoreceptor cell outer segments.

It is found in the membrane. Its function is as follows. Visual pigments are the light-absorbing molecules that mediate vision. They consist of an apoprotein, opsin, covalently linked to cis-retinal. This is Red-sensitive opsin-1 (opn1lw1) from Danio rerio (Zebrafish).